The following is a 775-amino-acid chain: Rab3 GTPase-activating protein catalytic subunit (775 aa).

Residues Ser173, Ser330, Ser373, Ser375, and Ser384 each carry the phosphoserine modification. The disordered stretch occupies residues Asp324–Gly351. The tract at residues Ala386–Leu414 is disordered. A Phosphoserine modification is found at Ser458.

This sequence belongs to the Rab3-GAP catalytic subunit family. The Rab3 GTPase-activating complex is a heterodimer composed of Rab3gap1 and Rab3gap2. The Rab3 GTPase-activating complex interacts with DMXL2. Interacts with LMAN1.

Its subcellular location is the cytoplasm. It is found in the endoplasmic reticulum. The protein resides in the golgi apparatus. It localises to the cis-Golgi network. Its function is as follows. Catalytic subunit of the Rab3 GTPase-activating (Rab3GAP) complex composed of RAB3GAP1 and RAB3GAP2, which has GTPase-activating protein (GAP) activity towards various Rab3 subfamily members (RAB3A, RAB3B, RAB3C and RAB3D), RAB5A and RAB43, and guanine nucleotide exchange factor (GEF) activity towards RAB18. As part of the Rab3GAP complex, acts as a GAP for Rab3 proteins by converting active RAB3-GTP to the inactive form RAB3-GDP. Rab3 proteins are involved in regulated exocytosis of neurotransmitters and hormones. The Rab3GAP complex, acts as a GEF for RAB18 by promoting the conversion of inactive RAB18-GDP to the active form RAB18-GTP. Recruits and stabilizes RAB18 at the cis-Golgi membrane where RAB18 is most likely activated. Also involved in RAB18 recruitment at the endoplasmic reticulum (ER) membrane where it maintains proper ER structure. Required for normal eye and brain development. May participate in neurodevelopmental processes such as proliferation, migration and differentiation before synapse formation, and non-synaptic vesicular release of neurotransmitters. The protein is Rab3 GTPase-activating protein catalytic subunit of Rattus norvegicus (Rat).